The primary structure comprises 205 residues: Outer-membrane lipoprotein carrier protein (205 aa).

A signal peptide spans 1–22 (MKKTTLKFAALTLLGLSNLALA).

The protein belongs to the LolA family. In terms of assembly, monomer.

Its subcellular location is the periplasm. Its function is as follows. Participates in the translocation of lipoproteins from the inner membrane to the outer membrane. Only forms a complex with a lipoprotein if the residue after the N-terminal Cys is not an aspartate (The Asp acts as a targeting signal to indicate that the lipoprotein should stay in the inner membrane). This is Outer-membrane lipoprotein carrier protein from Haemophilus influenzae (strain PittEE).